Here is a 526-residue protein sequence, read N- to C-terminus: Sterol 14-alpha demethylase CYP51A (526 aa).

The chain crosses the membrane as a helical span at residues 27–47 (IGFAVFLVLSVVLNVLNQLLF). Tyrosine 123 provides a ligand contact to lanosterol. Cysteine 470 contacts heme.

Belongs to the cytochrome P450 family. Heme serves as cofactor.

Its subcellular location is the endoplasmic reticulum membrane. The catalysed reaction is a 14alpha-methyl steroid + 3 reduced [NADPH--hemoprotein reductase] + 3 O2 = a Delta(14) steroid + formate + 3 oxidized [NADPH--hemoprotein reductase] + 4 H2O + 4 H(+). The enzyme catalyses a 14alpha-methyl steroid + reduced [NADPH--hemoprotein reductase] + O2 = a 14alpha-hydroxymethyl steroid + oxidized [NADPH--hemoprotein reductase] + H2O + H(+). It catalyses the reaction a 14alpha-hydroxymethyl steroid + reduced [NADPH--hemoprotein reductase] + O2 = a 14alpha-formyl steroid + oxidized [NADPH--hemoprotein reductase] + 2 H2O + H(+). It carries out the reaction a 14alpha-formyl steroid + reduced [NADPH--hemoprotein reductase] + O2 = a Delta(14) steroid + formate + oxidized [NADPH--hemoprotein reductase] + H2O + 2 H(+). The catalysed reaction is lanosterol + 3 reduced [NADPH--hemoprotein reductase] + 3 O2 = 4,4-dimethyl-5alpha-cholesta-8,14,24-trien-3beta-ol + formate + 3 oxidized [NADPH--hemoprotein reductase] + 4 H2O + 4 H(+). The enzyme catalyses lanosterol + reduced [NADPH--hemoprotein reductase] + O2 = 32-hydroxylanosterol + oxidized [NADPH--hemoprotein reductase] + H2O + H(+). It catalyses the reaction 32-hydroxylanosterol + reduced [NADPH--hemoprotein reductase] + O2 = 32-oxolanosterol + oxidized [NADPH--hemoprotein reductase] + 2 H2O + H(+). It carries out the reaction 32-oxolanosterol + reduced [NADPH--hemoprotein reductase] + O2 = 4,4-dimethyl-5alpha-cholesta-8,14,24-trien-3beta-ol + formate + oxidized [NADPH--hemoprotein reductase] + H2O + 2 H(+). The catalysed reaction is eburicol + 3 reduced [NADPH--hemoprotein reductase] + 3 O2 = 14-demethyleburicol + formate + 3 oxidized [NADPH--hemoprotein reductase] + 4 H2O + 4 H(+). The enzyme catalyses eburicol + reduced [NADPH--hemoprotein reductase] + O2 = 32-hydroxyeburicol + oxidized [NADPH--hemoprotein reductase] + H2O + H(+). It catalyses the reaction 32-hydroxyeburicol + reduced [NADPH--hemoprotein reductase] + O2 = 32-oxoeburicol + oxidized [NADPH--hemoprotein reductase] + 2 H2O + H(+). It carries out the reaction 32-oxoeburicol + reduced [NADPH--hemoprotein reductase] + O2 = 14-demethyleburicol + formate + oxidized [NADPH--hemoprotein reductase] + H2O + 2 H(+). It functions in the pathway steroid metabolism; ergosterol biosynthesis. In terms of biological role, together with cyp51A and cyp51C, encodes the sterol 14alpha-demethylase that plays a critical role in the third module of ergosterol biosynthesis pathway, being ergosterol the major sterol component in fungal membranes that participates in a variety of functions. Essential for ascospore production. The third module or late pathway involves the ergosterol synthesis itself through consecutive reactions that mainly occur in the endoplasmic reticulum (ER) membrane. In filamentous fungi, during the initial step of this module, lanosterol (lanosta-8,24-dien-3beta-ol) can be metabolized to eburicol. Sterol 14alpha-demethylase catalyzes the three-step oxidative removal of the 14alpha-methyl group (C-32) of both these sterols in the form of formate, and converts eburicol and lanosterol to 14-demethyleburicol (4,4,24-trimethylergosta-8,14,24(28)-trienol) and 4,4-dimethyl-5alpha-cholesta-8,14,24-trien-3beta-ol, respectively, which are further metabolized by other enzymes in the pathway to ergosterol. Can also use substrates not intrinsic to fungi, such as 24,25-dihydrolanosterol (DHL), producing 4,4'-dimethyl-8,14-cholestadien-3-beta-ol, but at lower rates than the endogenous substrates. The chain is Sterol 14-alpha demethylase CYP51A from Gibberella zeae (strain ATCC MYA-4620 / CBS 123657 / FGSC 9075 / NRRL 31084 / PH-1) (Wheat head blight fungus).